The chain runs to 412 residues: Divalent metal cation transporter MntH (412 aa).

Transmembrane regions (helical) follow at residues 19 to 39 (FALMGPAFIAAIGYIDPGNFA), 46 to 66 (ASFGYKLLWVVVWANLMAMLI), 94 to 114 (VWFYWVQAEIIAMATDLAEFI), 122 to 142 (LILGVSLLQGAVLTGIATFLI), 155 to 175 (LVIGGLLLFVAAAYIVELVFS), 196 to 216 (AVFLAAGVLGATIMPHVIYLH), 241 to 261 (IAMTIAGFVNLAMMATAAAAF), 290 to 310 (IFGLSLVAAGLSSTVVGTLAG), 329 to 349 (SVTMMPSFIVILMGLDPTRIL), 350 to 370 (VMSQVLLSFGIALALVPLLIF), and 389 to 409 (IGWMIVVLVVALNLWLLIGTL).

Belongs to the NRAMP family.

The protein resides in the cell inner membrane. In terms of biological role, h(+)-stimulated, divalent metal cation uptake system. This chain is Divalent metal cation transporter MntH, found in Enterobacter sp. (strain 638).